Here is a 344-residue protein sequence, read N- to C-terminus: Phosphoribosylformylglycinamidine cyclo-ligase (344 aa).

Belongs to the AIR synthase family.

It is found in the cytoplasm. The catalysed reaction is 2-formamido-N(1)-(5-O-phospho-beta-D-ribosyl)acetamidine + ATP = 5-amino-1-(5-phospho-beta-D-ribosyl)imidazole + ADP + phosphate + H(+). It functions in the pathway purine metabolism; IMP biosynthesis via de novo pathway; 5-amino-1-(5-phospho-D-ribosyl)imidazole from N(2)-formyl-N(1)-(5-phospho-D-ribosyl)glycinamide: step 2/2. The chain is Phosphoribosylformylglycinamidine cyclo-ligase from Neisseria meningitidis serogroup C (strain 053442).